A 281-amino-acid chain; its full sequence is uncharacterized protein (281 aa).

This is an uncharacterized protein from Methanocaldococcus jannaschii (strain ATCC 43067 / DSM 2661 / JAL-1 / JCM 10045 / NBRC 100440) (Methanococcus jannaschii).